Consider the following 765-residue polypeptide: Probable dipeptidyl peptidase 4 (765 aa).

An N-terminal signal peptide occupies residues 1 to 14; it reads MKWSILLLVGCAAA. N-linked (GlcNAc...) asparagine glycosylation is found at Asn35, Asn78, Asn101, Asn110, Asn169, Asn218, Asn465, and Asn490. The active-site Charge relay system is Ser613. Residue Asn665 is glycosylated (N-linked (GlcNAc...) asparagine). Catalysis depends on charge relay system residues Asp690 and His725.

It belongs to the peptidase S9B family.

It localises to the secreted. It carries out the reaction Release of an N-terminal dipeptide, Xaa-Yaa-|-Zaa-, from a polypeptide, preferentially when Yaa is Pro, provided Zaa is neither Pro nor hydroxyproline.. Its function is as follows. Extracellular dipeptidyl-peptidase which removes N-terminal dipeptides sequentially from polypeptides having unsubstituted N-termini provided that the penultimate residue is proline. Contributes to pathogenicity. This Aspergillus fumigatus (strain ATCC MYA-4609 / CBS 101355 / FGSC A1100 / Af293) (Neosartorya fumigata) protein is Probable dipeptidyl peptidase 4 (dpp4).